Here is a 399-residue protein sequence, read N- to C-terminus: Succinate--CoA ligase [ADP-forming] subunit beta (399 aa).

The 246-residue stretch at 9–254 (KELLAKYGIG…ETEEDPAEVE (246 aa)) folds into the ATP-grasp domain. Residues lysine 46, 53-55 (GRG), valine 112, and glutamate 117 each bind ATP. Asparagine 209 and aspartate 223 together coordinate Mg(2+). Substrate is bound by residues asparagine 274 and 331–333 (GIM).

It belongs to the succinate/malate CoA ligase beta subunit family. In terms of assembly, heterotetramer of two alpha and two beta subunits. Mg(2+) is required as a cofactor.

It carries out the reaction succinate + ATP + CoA = succinyl-CoA + ADP + phosphate. The catalysed reaction is GTP + succinate + CoA = succinyl-CoA + GDP + phosphate. It functions in the pathway carbohydrate metabolism; tricarboxylic acid cycle; succinate from succinyl-CoA (ligase route): step 1/1. Its function is as follows. Succinyl-CoA synthetase functions in the citric acid cycle (TCA), coupling the hydrolysis of succinyl-CoA to the synthesis of either ATP or GTP and thus represents the only step of substrate-level phosphorylation in the TCA. The beta subunit provides nucleotide specificity of the enzyme and binds the substrate succinate, while the binding sites for coenzyme A and phosphate are found in the alpha subunit. In Erythrobacter litoralis (strain HTCC2594), this protein is Succinate--CoA ligase [ADP-forming] subunit beta.